We begin with the raw amino-acid sequence, 433 residues long: Histone deacetylase RPD3 (433 aa).

The histone deacetylase stretch occupies residues 19–331; that stretch reads RRVAYFYDAD…WCFETGLLNN (313 aa). Histidine 151 is a catalytic residue. The ESA1-RPD3 motif motif lies at 320–340; the sequence is RTWCFETGLLNNVVLDKDLPY. The tract at residues 388-433 is disordered; that stretch reads SVQLNHTPRDAEDLGDVEEDSAEAKDTKGGSQYARDLHVEHDNEFY. Threonine 394 is subject to Phosphothreonine. Serine 408 bears the Phosphoserine mark. The span at 422–433 shows a compositional bias: basic and acidic residues; the sequence is RDLHVEHDNEFY.

The protein belongs to the histone deacetylase family. HD type 1 subfamily. Component of the RPD3C(L) complex composed of at least ASH1, CTI6, DEP1, PHO23, RPD3, RXT2, RXT3, SAP30, SDS3, SIN3, UME1 and UME6. Component of the RPD3C(S) complex composed of at least EAF3, RCO1, RPD3, SIN3, and UME1. Interacts with cyclophilins CPR1, CPR6 and CPR7, with the kinase HOG1, and with ESS1, CYC8 and HAC1.

It localises to the cytoplasm. Its subcellular location is the nucleus. It carries out the reaction N(6)-acetyl-L-lysyl-[histone] + H2O = L-lysyl-[histone] + acetate. Catalytic component of the RPD3 histone deacetylase (HDAC) complexes RPD3C(L) and RPD3C(S) responsible for the deacetylation of lysine residues on the N-terminal part of the core histones (H2A, H2B, H3 and H4). Histone deacetylation plays an important role in transcriptional regulation, cell cycle progression, DNA damage response, osmotic stress response and developmental events. Is involved in rDNA and telomere silencing and in double strand breaks repair. Required for both full transcription repression and activation of many genes including cell type-specific genes (STE6, TY2 and HO), cell differentiation-specific genes (SPO13), genes that respond to external signals (PHO5) and TRK2. The RPD3 complexes regulate also chromosomal replication timing. The polypeptide is Histone deacetylase RPD3 (RPD3) (Saccharomyces cerevisiae (strain ATCC 204508 / S288c) (Baker's yeast)).